A 150-amino-acid chain; its full sequence is uncharacterized protein (150 aa).

This is an uncharacterized protein from Aquifex aeolicus (strain VF5).